The sequence spans 306 residues: F-box/LRR-repeat protein At3g26922 (306 aa).

One can recognise an F-box domain in the interval 13–73; that stretch reads EDRISDLPEA…QSEDETYSEI (61 aa). LRR repeat units lie at residues 67 to 93, 98 to 122, 138 to 170, 171 to 196, 215 to 243, and 263 to 288; these read DETY…HLGF, CRSV…VLHV, CETL…RLEN, VDYK…VVYR, LTIY…KIDG, and IMNV…SLAL.

This chain is F-box/LRR-repeat protein At3g26922, found in Arabidopsis thaliana (Mouse-ear cress).